The primary structure comprises 194 residues: dTTP/UTP pyrophosphatase (194 aa).

Residue aspartate 69 is the Proton acceptor of the active site.

This sequence belongs to the Maf family. YhdE subfamily. A divalent metal cation is required as a cofactor.

It localises to the cytoplasm. It catalyses the reaction dTTP + H2O = dTMP + diphosphate + H(+). The enzyme catalyses UTP + H2O = UMP + diphosphate + H(+). In terms of biological role, nucleoside triphosphate pyrophosphatase that hydrolyzes dTTP and UTP. May have a dual role in cell division arrest and in preventing the incorporation of modified nucleotides into cellular nucleic acids. The chain is dTTP/UTP pyrophosphatase from Moorella thermoacetica (strain ATCC 39073 / JCM 9320).